Here is a 229-residue protein sequence, read N- to C-terminus: Ribose-5-phosphate isomerase A (229 aa).

Residues 28–31 (TGST), 85–88 (DGAD), and 98–101 (KGRG) each bind substrate. The Proton acceptor role is filled by glutamate 107. Lysine 125 contacts substrate.

This sequence belongs to the ribose 5-phosphate isomerase family. In terms of assembly, homodimer.

The enzyme catalyses aldehydo-D-ribose 5-phosphate = D-ribulose 5-phosphate. The protein operates within carbohydrate degradation; pentose phosphate pathway; D-ribose 5-phosphate from D-ribulose 5-phosphate (non-oxidative stage): step 1/1. Catalyzes the reversible conversion of ribose-5-phosphate to ribulose 5-phosphate. In Pyrococcus abyssi (strain GE5 / Orsay), this protein is Ribose-5-phosphate isomerase A.